The chain runs to 332 residues: Probable thc operon regulatory protein (332 aa).

Positions 227-328 (RLAVDYLEAH…GVSPSEDLRT (102 aa)) constitute an HTH araC/xylS-type domain. 2 DNA-binding regions (H-T-H motif) span residues 244–265 (AQVARNVGVSVRSLQVGFQNSL) and 295–318 (VTEIAQRWGFLHVGRFAGEYKQTF).

Its function is as follows. Probably involved in the positive regulation of the thc operon for the degradation of the thiocarbamate herbicide EPTC. This chain is Probable thc operon regulatory protein (thcR), found in Rhodococcus erythropolis (Arthrobacter picolinophilus).